Reading from the N-terminus, the 108-residue chain is MALWTRLLPLLALLALWAPAPAQAFVNQHLCGSHLVEALYLVCGERGFFYTPKARREAENPQAGAVELGGGLGGLQALALEGPPQKRGIVEQCCTSICSLYQLENYCN.

The signal sequence occupies residues 1–24; it reads MALWTRLLPLLALLALWAPAPAQA. 3 disulfide bridges follow: C31–C94, C43–C107, and C93–C98. The propeptide at 57–85 is c peptide; the sequence is EAENPQAGAVELGGGLGGLQALALEGPPQ.

This sequence belongs to the insulin family. As to quaternary structure, heterodimer of a B chain and an A chain linked by two disulfide bonds.

The protein resides in the secreted. Functionally, insulin decreases blood glucose concentration. It increases cell permeability to monosaccharides, amino acids and fatty acids. It accelerates glycolysis, the pentose phosphate cycle, and glycogen synthesis in liver. The sequence is that of Insulin (INS) from Sus scrofa (Pig).